A 124-amino-acid chain; its full sequence is Large ribosomal subunit protein eL22y (124 aa).

It belongs to the eukaryotic ribosomal protein eL22 family.

The sequence is that of Large ribosomal subunit protein eL22y (RPL22C) from Arabidopsis thaliana (Mouse-ear cress).